The sequence spans 252 residues: Hydroxyacylglutathione hydrolase (252 aa).

Residues histidine 54, histidine 56, aspartate 58, histidine 59, histidine 111, aspartate 128, and histidine 166 each coordinate Zn(2+).

The protein belongs to the metallo-beta-lactamase superfamily. Glyoxalase II family. In terms of assembly, monomer. Requires Zn(2+) as cofactor.

The enzyme catalyses an S-(2-hydroxyacyl)glutathione + H2O = a 2-hydroxy carboxylate + glutathione + H(+). Its pathway is secondary metabolite metabolism; methylglyoxal degradation; (R)-lactate from methylglyoxal: step 2/2. Its function is as follows. Thiolesterase that catalyzes the hydrolysis of S-D-lactoyl-glutathione to form glutathione and D-lactic acid. The protein is Hydroxyacylglutathione hydrolase of Vibrio campbellii (strain ATCC BAA-1116).